We begin with the raw amino-acid sequence, 113 residues long: Nucleoid-associated protein EUBREC_0329 (113 aa).

Residues methionine 1–proline 12 show a composition bias toward gly residues. Residues methionine 1–alanine 45 are disordered. Residues arginine 27–glutamate 37 show a composition bias toward basic and acidic residues.

Belongs to the YbaB/EbfC family. Homodimer.

It localises to the cytoplasm. The protein localises to the nucleoid. In terms of biological role, binds to DNA and alters its conformation. May be involved in regulation of gene expression, nucleoid organization and DNA protection. This Agathobacter rectalis (strain ATCC 33656 / DSM 3377 / JCM 17463 / KCTC 5835 / VPI 0990) (Eubacterium rectale) protein is Nucleoid-associated protein EUBREC_0329.